We begin with the raw amino-acid sequence, 296 residues long: Nucleotide-binding protein str0831 (296 aa).

13-20 (GMSGAGKT) serves as a coordination point for ATP. 63–66 (DMRS) contributes to the GTP binding site.

The protein belongs to the RapZ-like family.

Its function is as follows. Displays ATPase and GTPase activities. This is Nucleotide-binding protein str0831 from Streptococcus thermophilus (strain CNRZ 1066).